A 726-amino-acid polypeptide reads, in one-letter code: MPDSRAAPQESLLDASLGTTQENVGTSSLTDGQTLSKEPLSHALKLSTPEKVKDAQLNPPEEALWTTRADGRVRLRIDPICSQTPRTVHQMFSTTLDKYGDLSAMGFKRQGTWEHISYTQYYLLARKAAKGFLKLGLERAHSVAILAFNSPEWFFSAVGAVFGGGIITGIYTTSSPEACQYIAYDCRANIIVVDTQKQLEKILKIWKHLPHLKAVVIYREAPPMRMPSVYTMEELMELGNEVPEEALDVIINAQKPNQCCALVYTSGTTGNPKGVMLSQDNITWTARYGSQAGDIQPAEIQQEVVVSYLPLSHIAAQIYDLWTGIQWGAQVCFAEPDALKGSLVNTLREVEPTSHMGVPRVWEKIMEQIQEVAAQSGFIWRKMLLWAMSVTLEQNLTCPSSDLKPFTTRLADYLVLAKVRQALGFAKCQKNFYGAAPMTAETQHFFLGLNIRLYAGYGLSETSGPHFMSSPYNYRLYSSGKVVPGCQVKLVNEDAEGIGEICLWGRTIFMGYLNMEDKTCEAIDAEGWLHTGDTGRLDADGFLYITGRLKELIITAGGENVPPVPIEEAVKTELPIIRNAMLIGDQRKFLSMLLTLKCTLDPDTFEPTDNLTEQAVEFCQRVGSKATTVSEVVGKKDEAVYQAIEEGIQRVNMNAAARPYHIQKWAILEKDFSISGGELGPTMKLKRLAVLEKYKDVIDSFYQEQKSKQGSSLPGFSLRWQTGASS.

Positions 1–39 are disordered; sequence MPDSRAAPQESLLDASLGTTQENVGTSSLTDGQTLSKEP. Over residues 17 to 36 the composition is skewed to polar residues; sequence LGTTQENVGTSSLTDGQTLS. Ser-36 is modified (phosphoserine). Phosphotyrosine is present on Tyr-641. A disordered region spans residues 707-726; sequence SKQGSSLPGFSLRWQTGASS.

It belongs to the ATP-dependent AMP-binding enzyme family. Bubblegum subfamily.

The protein localises to the cytoplasm. It is found in the cytoplasmic vesicle. The protein resides in the microsome. It localises to the endoplasmic reticulum. Its subcellular location is the cell membrane. The enzyme catalyses a long-chain fatty acid + ATP + CoA = a long-chain fatty acyl-CoA + AMP + diphosphate. It catalyses the reaction (E)-hexadec-2-enoate + ATP + CoA = (2E)-hexadecenoyl-CoA + AMP + diphosphate. The catalysed reaction is hexadecanoate + ATP + CoA = hexadecanoyl-CoA + AMP + diphosphate. Its function is as follows. Catalyzes the conversion of fatty acids such as long-chain and very long-chain fatty acids to their active form acyl-CoAs for both synthesis of cellular lipids, and degradation via beta-oxidation. Can activate diverse saturated, monosaturated and polyunsaturated fatty acids. This chain is Long-chain-fatty-acid--CoA ligase ACSBG1, found in Bos taurus (Bovine).